The sequence spans 477 residues: UDP-N-acetylmuramate--L-alanine ligase (477 aa).

112-118 (GTHGKTT) is a binding site for ATP.

The protein belongs to the MurCDEF family.

It is found in the cytoplasm. The enzyme catalyses UDP-N-acetyl-alpha-D-muramate + L-alanine + ATP = UDP-N-acetyl-alpha-D-muramoyl-L-alanine + ADP + phosphate + H(+). The protein operates within cell wall biogenesis; peptidoglycan biosynthesis. Cell wall formation. The protein is UDP-N-acetylmuramate--L-alanine ligase of Verminephrobacter eiseniae (strain EF01-2).